The following is a 188-amino-acid chain: MHFTATVLLAFGMSMDAFAASIGKGATLHKPKFSEALRTGLIFGAVETLTPLIGWGLGILASKFVLEWNHWIAFVLLIFLGGRMIIEGIRGGSDEDETPLRRHSFWLLVTTAIATSLDAMAVGVGLAFLQVNIIATALAIGCATLIMSTLGMMIGRFIGPMLGKRAEILGGVVLIGIGVQILWTHFHG.

Helical transmembrane passes span Phe3–Gly23, Leu41–Ala61, Leu66–Ile86, Trp106–Phe128, Ala143–Gly163, and Ile168–Gly188.

The protein belongs to the MntP (TC 9.B.29) family.

Its subcellular location is the cell inner membrane. Its function is as follows. Probably functions as a manganese efflux pump. This Salmonella typhimurium (strain LT2 / SGSC1412 / ATCC 700720) protein is Probable manganese efflux pump MntP.